We begin with the raw amino-acid sequence, 156 residues long: Small ribosomal subunit protein uS7 (156 aa).

It belongs to the universal ribosomal protein uS7 family. As to quaternary structure, part of the 30S ribosomal subunit. Contacts proteins S9 and S11.

In terms of biological role, one of the primary rRNA binding proteins, it binds directly to 16S rRNA where it nucleates assembly of the head domain of the 30S subunit. Is located at the subunit interface close to the decoding center, probably blocks exit of the E-site tRNA. The sequence is that of Small ribosomal subunit protein uS7 from Hahella chejuensis (strain KCTC 2396).